A 201-amino-acid chain; its full sequence is Ras-related protein Rab-1B (201 aa).

Residue M1 is modified to N-acetylmethionine. Positions 17, 18, 19, 20, 21, 22, 23, 33, 34, 35, 36, 39, and 40 each coordinate GTP. S22 contributes to the Mg(2+) binding site. The short motif at 30-45 (DDTYTESYISTIGVDF) is the Switch 1 element. T40 and D63 together coordinate Mg(2+). The segment at 64–83 (TAGQERFRTITSSYYRGAHG) is switch 2 region; required for interaction with REP1/CHM. The short motif at 65 to 80 (AGQERFRTITSSYYRG) is the Switch 2 element. 7 residues coordinate GTP: G66, N121, K122, D124, S151, A152, and K153. The tract at residues 174 to 201 (GPGAASGGERPNLKIDSTPVKPAGGGCC) is disordered. S-geranylgeranyl cysteine attachment occurs at residues C200 and C201. A Cysteine methyl ester modification is found at C201.

This sequence belongs to the small GTPase superfamily. Rab family. As to quaternary structure, interacts with MICAL1 and MICAL2. Interacts (in GTP-bound form) with MICALCL, MICAL1 and MILCAL3. Interacts with GDI1; the interaction requires the GDP-bound state. Interacts with CHM/REP1; the interaction requires the GDP-bound form and is necessary for prenylation by GGTase II. Interacts with RabGAP TBC1D20. Interacts (in GDP-bound form) with lipid phosphatase MTMR6 (via GRAM domain); the interaction regulates MTMR6 recruitment to the endoplasmic reticulum-Golgi intermediate compartment. Interacts (in GDP-bound form) with lipid phosphatase MTMR7. Mg(2+) serves as cofactor. In terms of processing, prenylated; by GGTase II, only after interaction of the substrate with Rab escort protein 1 (REP1).

Its subcellular location is the cytoplasm. The protein localises to the membrane. The protein resides in the preautophagosomal structure membrane. It is found in the perinuclear region. The enzyme catalyses GTP + H2O = GDP + phosphate + H(+). Regulated by guanine nucleotide exchange factors (GEFs) which promote the exchange of bound GDP for free GTP. Regulated by GTPase activating proteins (GAPs) including TBC1D20 which increases the GTP hydrolysis activity. Inhibited by GDP dissociation inhibitors (GDIs). The small GTPases Rab are key regulators of intracellular membrane trafficking, from the formation of transport vesicles to their fusion with membranes. Rabs cycle between an inactive GDP-bound form and an active GTP-bound form that is able to recruit to membranes different set of downstream effectors directly responsible for vesicle formation, movement, tethering and fusion. Plays a role in the initial events of the autophagic vacuole development which take place at specialized regions of the endoplasmic reticulum. Regulates vesicular transport between the endoplasmic reticulum and successive Golgi compartments. Required to modulate the compacted morphology of the Golgi. Promotes the recruitment of lipid phosphatase MTMR6 to the endoplasmic reticulum-Golgi intermediate compartment. In Macaca fascicularis (Crab-eating macaque), this protein is Ras-related protein Rab-1B (RAB1B).